The primary structure comprises 338 residues: MQVYYDKDCDLSIIQGMKVAIIGFGSQGHAHAANLQDSGVDVTVGLRPGSSSIKKAEGYGLKTADVATAVAGADVVMILTPDEFQSVLYKEEIEPNIKQGAVLAFAHGFAIIYNQIEPRKDLDVIMIAPKAPGHTVRSEFVRGGGIPDLIAIQQDASGKAKEIALSYASGVGGGRTGIIETTFRDECETDLFGEQAVLCGGAVELVKAGFDTLVEAGYEPEMAYFECLHELKLIVDLMFEGGIADMNYSISNNAEYGEYVTGPRVINDESRAAMREALKNIQTGEYAKQFILEGQSNYPSMTAARRLNEEHGIEVVGRKLRAMMPWIASNKIVDQEKN.

Positions 1-181 constitute a KARI N-terminal Rossmann domain; the sequence is MQVYYDKDCD…GGGRTGIIET (181 aa). NADP(+) contacts are provided by residues 24 to 27, Arg-47, Ser-50, Ser-52, and 82 to 85; these read FGSQ and DEFQ. His-107 is an active-site residue. An NADP(+)-binding site is contributed by Gly-133. In terms of domain architecture, KARI C-terminal knotted spans 182–327; it reads TFRDECETDL…RKLRAMMPWI (146 aa). 4 residues coordinate Mg(2+): Asp-190, Glu-194, Glu-226, and Glu-230. Position 251 (Ser-251) interacts with substrate.

It belongs to the ketol-acid reductoisomerase family. It depends on Mg(2+) as a cofactor.

The enzyme catalyses (2R)-2,3-dihydroxy-3-methylbutanoate + NADP(+) = (2S)-2-acetolactate + NADPH + H(+). The catalysed reaction is (2R,3R)-2,3-dihydroxy-3-methylpentanoate + NADP(+) = (S)-2-ethyl-2-hydroxy-3-oxobutanoate + NADPH + H(+). Its pathway is amino-acid biosynthesis; L-isoleucine biosynthesis; L-isoleucine from 2-oxobutanoate: step 2/4. It functions in the pathway amino-acid biosynthesis; L-valine biosynthesis; L-valine from pyruvate: step 2/4. In terms of biological role, involved in the biosynthesis of branched-chain amino acids (BCAA). Catalyzes an alkyl-migration followed by a ketol-acid reduction of (S)-2-acetolactate (S2AL) to yield (R)-2,3-dihydroxy-isovalerate. In the isomerase reaction, S2AL is rearranged via a Mg-dependent methyl migration to produce 3-hydroxy-3-methyl-2-ketobutyrate (HMKB). In the reductase reaction, this 2-ketoacid undergoes a metal-dependent reduction by NADPH to yield (R)-2,3-dihydroxy-isovalerate. The sequence is that of Ketol-acid reductoisomerase (NADP(+)) from Hydrogenovibrio crunogenus (strain DSM 25203 / XCL-2) (Thiomicrospira crunogena).